Consider the following 184-residue polypeptide: Lipoprotein signal peptidase (184 aa).

3 helical membrane passes run 23–43 (FLYYKLALILFVGFVILFQVF), 88–108 (PGLVYFLQGFLSFIALFFLVF), and 110–130 (TSYNYIFWITTLAFGSLGNFF). Active-site residues include Asp-142 and Asp-157. Residues 156 to 176 (ADCCITFSFIGLFLSFLIQFF) form a helical membrane-spanning segment.

The protein belongs to the peptidase A8 family.

The protein localises to the cell membrane. The enzyme catalyses Release of signal peptides from bacterial membrane prolipoproteins. Hydrolyzes -Xaa-Yaa-Zaa-|-(S,diacylglyceryl)Cys-, in which Xaa is hydrophobic (preferably Leu), and Yaa (Ala or Ser) and Zaa (Gly or Ala) have small, neutral side chains.. It participates in protein modification; lipoprotein biosynthesis (signal peptide cleavage). Functionally, this protein specifically catalyzes the removal of signal peptides from prolipoproteins. In Mycoplasma pneumoniae (strain ATCC 29342 / M129 / Subtype 1) (Mycoplasmoides pneumoniae), this protein is Lipoprotein signal peptidase.